A 144-amino-acid chain; its full sequence is Large ribosomal subunit protein uL14 (144 aa).

Belongs to the universal ribosomal protein uL14 family. As to quaternary structure, part of the 50S ribosomal subunit. Forms a cluster with proteins L3 and L24e, part of which may contact the 16S rRNA in 2 intersubunit bridges.

Its function is as follows. Binds to 23S rRNA. Forms part of two intersubunit bridges in the 70S ribosome. In Pyrobaculum aerophilum (strain ATCC 51768 / DSM 7523 / JCM 9630 / CIP 104966 / NBRC 100827 / IM2), this protein is Large ribosomal subunit protein uL14.